The following is a 379-amino-acid chain: Queuine tRNA-ribosyltransferase (379 aa).

The active-site Proton acceptor is the Asp-94. Substrate contacts are provided by residues 94–98, Asp-148, Gln-191, and Gly-218; that span reads DSGGF. An RNA binding region spans residues 249–255; it reads GVGSPDA. The active-site Nucleophile is the Asp-268. An RNA binding; important for wobble base 34 recognition region spans residues 273-277; sequence TRIAR. Zn(2+)-binding residues include Cys-306, Cys-308, Cys-311, and His-337.

It belongs to the queuine tRNA-ribosyltransferase family. In terms of assembly, homodimer. Within each dimer, one monomer is responsible for RNA recognition and catalysis, while the other monomer binds to the replacement base PreQ1. Zn(2+) serves as cofactor.

It carries out the reaction 7-aminomethyl-7-carbaguanine + guanosine(34) in tRNA = 7-aminomethyl-7-carbaguanosine(34) in tRNA + guanine. It participates in tRNA modification; tRNA-queuosine biosynthesis. In terms of biological role, catalyzes the base-exchange of a guanine (G) residue with the queuine precursor 7-aminomethyl-7-deazaguanine (PreQ1) at position 34 (anticodon wobble position) in tRNAs with GU(N) anticodons (tRNA-Asp, -Asn, -His and -Tyr). Catalysis occurs through a double-displacement mechanism. The nucleophile active site attacks the C1' of nucleotide 34 to detach the guanine base from the RNA, forming a covalent enzyme-RNA intermediate. The proton acceptor active site deprotonates the incoming PreQ1, allowing a nucleophilic attack on the C1' of the ribose to form the product. After dissociation, two additional enzymatic reactions on the tRNA convert PreQ1 to queuine (Q), resulting in the hypermodified nucleoside queuosine (7-(((4,5-cis-dihydroxy-2-cyclopenten-1-yl)amino)methyl)-7-deazaguanosine). The polypeptide is Queuine tRNA-ribosyltransferase (Oceanobacillus iheyensis (strain DSM 14371 / CIP 107618 / JCM 11309 / KCTC 3954 / HTE831)).